We begin with the raw amino-acid sequence, 299 residues long: Oxygen-dependent coproporphyrinogen-III oxidase (299 aa).

Ser92 lines the substrate pocket. 2 residues coordinate Mn(2+): His96 and His106. His106 serves as the catalytic Proton donor. 108 to 110 lines the substrate pocket; that stretch reads NVR. 2 residues coordinate Mn(2+): His145 and His175. The tract at residues 240-275 is important for dimerization; sequence YVEFNLVWDRGTLFGLQTGGRTESILMSMPPLVRWE. Position 258–260 (258–260) interacts with substrate; it reads GGR.

It belongs to the aerobic coproporphyrinogen-III oxidase family. In terms of assembly, homodimer. Mn(2+) is required as a cofactor.

It localises to the cytoplasm. The catalysed reaction is coproporphyrinogen III + O2 + 2 H(+) = protoporphyrinogen IX + 2 CO2 + 2 H2O. It participates in porphyrin-containing compound metabolism; protoporphyrin-IX biosynthesis; protoporphyrinogen-IX from coproporphyrinogen-III (O2 route): step 1/1. Its function is as follows. Involved in the heme biosynthesis. Catalyzes the aerobic oxidative decarboxylation of propionate groups of rings A and B of coproporphyrinogen-III to yield the vinyl groups in protoporphyrinogen-IX. In Escherichia coli O157:H7, this protein is Oxygen-dependent coproporphyrinogen-III oxidase.